The chain runs to 274 residues: MIARILSINANDLFCEVNHELKKLHAPGRWKHQKINLAPNDLLELNDQGEIIKLIERKNYLNRPKVANLDHVVLVFSIKDPQLNLKQLFKFMVYFESQLGFKPLIVFSKLDLDHDQNEFKKIVEALEQINYQVFKLNEPDDFLRLKNLLFNKVTIFCGHSGVGKSTLLKRLDNSLDIWTQAVSAKLKRGKNTTTATKLYKFLDGYLVDSPGFSIYDLNLTKQQLSCGLIEFAQYQTKCKFNDCLHLENSADCYLKKKINSLIYQIYLSVIKSII.

The region spanning 58–215 (KNYLNRPKVA…LVDSPGFSIY (158 aa)) is the CP-type G domain. Residues 108–111 (SKLD) and 158–166 (GHSGVGKST) contribute to the GTP site. Residues Cys238, Cys243, His245, and Cys252 each contribute to the Zn(2+) site.

It belongs to the TRAFAC class YlqF/YawG GTPase family. RsgA subfamily. As to quaternary structure, monomer. Associates with 30S ribosomal subunit, binds 16S rRNA. The cofactor is Zn(2+).

The protein localises to the cytoplasm. Its function is as follows. One of several proteins that assist in the late maturation steps of the functional core of the 30S ribosomal subunit. Helps release RbfA from mature subunits. May play a role in the assembly of ribosomal proteins into the subunit. Circularly permuted GTPase that catalyzes slow GTP hydrolysis, GTPase activity is stimulated by the 30S ribosomal subunit. The chain is Small ribosomal subunit biogenesis GTPase RsgA from Mycoplasmoides gallisepticum (strain R(low / passage 15 / clone 2)) (Mycoplasma gallisepticum).